Here is a 343-residue protein sequence, read N- to C-terminus: Autoinducer 2 import system permease protein LsrC (343 aa).

Transmembrane regions (helical) follow at residues 13–33, 38–58, 61–81, 92–112, 114–134, 154–174, 212–232, 251–271, and 283–303; these read FLAI…YLSF, MIFA…LVML, NIDV…GVAL, LFAL…VVGL, IPAI…MLLW, VALG…IGAW, INGM…GFVP, GISL…AFFL, and LPAW…LVLD. The tract at residues 321–343 is disordered; that stretch reads RFQPGNKGGKHVTPFPKRKKEVA.

The protein belongs to the binding-protein-dependent transport system permease family. AraH/RbsC subfamily. The complex is composed of two ATP-binding proteins (LsrA), two transmembrane proteins (LsrC and LsrD) and a solute-binding protein (LsrB).

The protein localises to the cell inner membrane. In terms of biological role, part of the ABC transporter complex LsrABCD involved in autoinducer 2 (AI-2) import. Probably responsible for the translocation of the substrate across the membrane. The protein is Autoinducer 2 import system permease protein LsrC (lsrC) of Enterobacter sp. (strain 638).